Reading from the N-terminus, the 548-residue chain is Glucose-6-phosphate isomerase (548 aa).

The active-site Proton donor is the Glu353. Active-site residues include His384 and Lys512.

This sequence belongs to the GPI family.

It localises to the cytoplasm. It carries out the reaction alpha-D-glucose 6-phosphate = beta-D-fructose 6-phosphate. It functions in the pathway carbohydrate biosynthesis; gluconeogenesis. The protein operates within carbohydrate degradation; glycolysis; D-glyceraldehyde 3-phosphate and glycerone phosphate from D-glucose: step 2/4. Functionally, catalyzes the reversible isomerization of glucose-6-phosphate to fructose-6-phosphate. The polypeptide is Glucose-6-phosphate isomerase (Chlorobium chlorochromatii (strain CaD3)).